An 829-amino-acid chain; its full sequence is Pre-mRNA-splicing factor syf1 (829 aa).

HAT repeat units lie at residues 15–47 (SLVS…YKLQ), 49–81 (GTVQ…FRTK), 93–125 (SEYQ…FLMQ), 127–161 (PLVT…FANS), 163–182 (EGET…PEDA), 277–312 (GSFE…FEES), 380–418 (DNKE…FYEA), 420–456 (GDLS…MELR), 473–505 (APKR…YVDL), 544–578 (KYFE…KAVD), 581–615 (ISIE…LEEE), and 689–723 (GEID…FEVQ). The interval 799–829 (AASEGPKGGSMPVQPVEVHNPDAIDLDEMDE) is disordered.

Belongs to the crooked-neck family. In terms of assembly, associated with the spliceosome.

It is found in the nucleus. Its function is as follows. Involved in pre-mRNA splicing and cell cycle progression. This chain is Pre-mRNA-splicing factor syf1 (msp-41), found in Neurospora crassa (strain ATCC 24698 / 74-OR23-1A / CBS 708.71 / DSM 1257 / FGSC 987).